The following is a 537-amino-acid chain: uncharacterized protein (537 aa).

This is an uncharacterized protein from Mycobacterium bovis (strain ATCC BAA-935 / AF2122/97).